We begin with the raw amino-acid sequence, 441 residues long: Maltose-6'-phosphate glucosidase MalH (441 aa).

4-70 (FSVVIAGGGS…PEIEFLATTN (67 aa)) lines the NAD(+) pocket. 2 residues coordinate substrate: arginine 93 and asparagine 147. Residue cysteine 169 participates in Mn(2+) binding. Aspartate 170 (proton donor) is an active-site residue. Residue histidine 200 coordinates Mn(2+). The Proton acceptor role is filled by tyrosine 264. Substrate is bound at residue arginine 284.

In terms of assembly, homotetramer. The cofactor is NAD(+). Mn(2+) serves as cofactor.

The catalysed reaction is alpha-maltose 6'-phosphate + H2O = D-glucose 6-phosphate + D-glucose. Its function is as follows. Catalyzes the hydrolysis of O-alpha-linked disaccharide 6-phosphates, including maltose-6'P and all five phosphorylated isomers of sucrose, but not sucrose-6P. Does not hydrolyze beta-linked disaccharide 6-phosphates such as cellobiose-6'P and gentiobiose-6'P. Is involved in the dissimilation of maltose and related O-alpha-linked glucosides produced via the phosphoenolpyruvate-dependent sugar phosphotransferase system (PEP-PTS). The polypeptide is Maltose-6'-phosphate glucosidase MalH (malH) (Clostridium acetobutylicum (strain ATCC 824 / DSM 792 / JCM 1419 / IAM 19013 / LMG 5710 / NBRC 13948 / NRRL B-527 / VKM B-1787 / 2291 / W)).